The primary structure comprises 142 residues: 3-hydroxyacyl-[acyl-carrier-protein] dehydratase FabZ (142 aa).

H50 is an active-site residue.

This sequence belongs to the thioester dehydratase family. FabZ subfamily.

The protein resides in the cytoplasm. It catalyses the reaction a (3R)-hydroxyacyl-[ACP] = a (2E)-enoyl-[ACP] + H2O. Its function is as follows. Involved in unsaturated fatty acids biosynthesis. Catalyzes the dehydration of short chain beta-hydroxyacyl-ACPs and long chain saturated and unsaturated beta-hydroxyacyl-ACPs. This chain is 3-hydroxyacyl-[acyl-carrier-protein] dehydratase FabZ, found in Clostridium botulinum (strain Alaska E43 / Type E3).